The following is a 74-amino-acid chain: uncharacterized protein (74 aa).

This is an uncharacterized protein from Salmonella typhimurium.